The primary structure comprises 399 residues: Flavohemoprotein (399 aa).

In terms of domain architecture, Globin spans Met1–Lys138. His85 provides a ligand contact to heme b. Residues Tyr95 and Glu137 each act as charge relay system in the active site. Positions Gly149 to Val399 are reductase. Residues Lys152–Asp255 enclose the FAD-binding FR-type domain. FAD-binding positions include Tyr190 and Arg206–Ser209. Gly268–Pro273 contacts NADP(+). FAD is bound at residue Leu388–Pro391.

This sequence belongs to the globin family. Two-domain flavohemoproteins subfamily. The protein in the C-terminal section; belongs to the flavoprotein pyridine nucleotide cytochrome reductase family. Heme b serves as cofactor. It depends on FAD as a cofactor.

It carries out the reaction 2 nitric oxide + NADPH + 2 O2 = 2 nitrate + NADP(+) + H(+). The catalysed reaction is 2 nitric oxide + NADH + 2 O2 = 2 nitrate + NAD(+) + H(+). Functionally, is involved in NO detoxification in an aerobic process, termed nitric oxide dioxygenase (NOD) reaction that utilizes O(2) and NAD(P)H to convert NO to nitrate, which protects the bacterium from various noxious nitrogen compounds. Therefore, plays a central role in the inducible response to nitrosative stress. The sequence is that of Flavohemoprotein (hmp) from Bacillus subtilis (strain 168).